A 316-amino-acid chain; its full sequence is tRNA dimethylallyltransferase (316 aa).

Glycine 17–threonine 24 contacts ATP. Threonine 19 to threonine 24 contacts substrate. 4 interaction with substrate tRNA regions span residues aspartate 42 to leucine 45, glutamine 166 to arginine 170, arginine 247 to arginine 252, and lysine 280 to arginine 287.

Belongs to the IPP transferase family. Monomer. Mg(2+) is required as a cofactor.

It carries out the reaction adenosine(37) in tRNA + dimethylallyl diphosphate = N(6)-dimethylallyladenosine(37) in tRNA + diphosphate. Its function is as follows. Catalyzes the transfer of a dimethylallyl group onto the adenine at position 37 in tRNAs that read codons beginning with uridine, leading to the formation of N6-(dimethylallyl)adenosine (i(6)A). The polypeptide is tRNA dimethylallyltransferase (Escherichia coli O157:H7).